The sequence spans 325 residues: uncharacterized protein (325 aa).

Residues 49–151 (RYEHSIGVML…ELCADRTDYT (103 aa)) enclose the HD domain.

This is an uncharacterized protein from Bacillus subtilis (strain 168).